Reading from the N-terminus, the 373-residue chain is Lipoyl amidotransferase LIPT1, mitochondrial (373 aa).

The transit peptide at 1–25 (MLIPFSMKNCFQLLCNLKVPAAGFK) directs the protein to the mitochondrion. Residues 57–243 (LEGKPVLFLW…EYATSHQIDN (187 aa)) form the BPL/LPL catalytic domain. (R)-lipoyl-5'-AMP-binding residues include tyrosine 107, arginine 151, lysine 161, threonine 179, threonine 208, and alanine 210.

This sequence belongs to the LplA family.

The protein resides in the mitochondrion. It carries out the reaction N(6)-[(R)-lipoyl]-L-lysyl-[glycine-cleavage complex H protein] + L-lysyl-[lipoyl-carrier protein] = L-lysyl-[glycine-cleavage complex H protein] + N(6)-[(R)-lipoyl]-L-lysyl-[lipoyl-carrier protein]. The catalysed reaction is (R)-lipoyl-5'-AMP + L-lysyl-[lipoyl-carrier protein] = N(6)-[(R)-lipoyl]-L-lysyl-[lipoyl-carrier protein] + AMP + 2 H(+). The protein operates within protein modification; protein lipoylation via exogenous pathway; protein N(6)-(lipoyl)lysine from lipoate: step 2/2. Inhibited by lipoyl-AMP analogs including hexanoyl-, octanoyl- and decanoyl-AMP. In terms of biological role, lipoyl amidotransferase that catalyzes the transfer of lipoyl moieties from lipoyl-protein H of the glycine cleavage system (lipoyl-GCSH) to E2 subunits of the pyruvate dehydrogenase complex (PDCE2). Unable to catalyze the transfer of octanoyl from octanoyl-GCSH to PDCE2. In vitro, it is also able to catalyze the transfer of the lipoyl group from lipoyl-AMP to the specific lysine residue of lipoyl domains of lipoate-dependent enzymes but this reaction may not be physiologically relevant. This Bos taurus (Bovine) protein is Lipoyl amidotransferase LIPT1, mitochondrial (LIPT1).